The sequence spans 134 residues: Small ribosomal subunit protein bS6 (134 aa).

A disordered region spans residues 99–134 (EPSAMMQKRDRDERKDRERGRRRDEDGFSGDRNEEN). The segment covering 105-134 (QKRDRDERKDRERGRRRDEDGFSGDRNEEN) has biased composition (basic and acidic residues).

It belongs to the bacterial ribosomal protein bS6 family.

Its function is as follows. Binds together with bS18 to 16S ribosomal RNA. The chain is Small ribosomal subunit protein bS6 from Methylobacterium nodulans (strain LMG 21967 / CNCM I-2342 / ORS 2060).